The sequence spans 75 residues: U6-lycotoxin-Ls1d (75 aa).

The signal sequence occupies residues 1-21 (MKLLLFTALVLVVISLVEVEA). Residues 22–25 (ENER) constitute a propeptide that is removed on maturation.

Belongs to the neurotoxin 19 (CSTX) family. 06 (U6-Lctx) subfamily. In terms of processing, contains 4 disulfide bonds. In terms of tissue distribution, expressed by the venom gland.

Its subcellular location is the secreted. The protein is U6-lycotoxin-Ls1d of Lycosa singoriensis (Wolf spider).